The chain runs to 322 residues: Ribose-phosphate pyrophosphokinase (322 aa).

Residues 43–45 (DGE) and 102–103 (RQ) each bind ATP. The Mg(2+) site is built by His-137 and Asp-177. The active site involves Lys-201. Residues Arg-203, Asp-227, and 231 to 235 (DTAGT) each bind D-ribose 5-phosphate.

The protein belongs to the ribose-phosphate pyrophosphokinase family. Class I subfamily. As to quaternary structure, homohexamer. Requires Mg(2+) as cofactor.

It is found in the cytoplasm. It catalyses the reaction D-ribose 5-phosphate + ATP = 5-phospho-alpha-D-ribose 1-diphosphate + AMP + H(+). It participates in metabolic intermediate biosynthesis; 5-phospho-alpha-D-ribose 1-diphosphate biosynthesis; 5-phospho-alpha-D-ribose 1-diphosphate from D-ribose 5-phosphate (route I): step 1/1. In terms of biological role, involved in the biosynthesis of the central metabolite phospho-alpha-D-ribosyl-1-pyrophosphate (PRPP) via the transfer of pyrophosphoryl group from ATP to 1-hydroxyl of ribose-5-phosphate (Rib-5-P). In Xylella fastidiosa (strain Temecula1 / ATCC 700964), this protein is Ribose-phosphate pyrophosphokinase.